The sequence spans 218 residues: Antifreeze protein Maxi (218 aa).

The first 23 residues, 1-23 (MALSLFTVGQFIFLFWTISITEA), serve as a signal peptide directing secretion.

Belongs to the type-I AFP family. As to quaternary structure, homodimer. In terms of tissue distribution, detected in blood serum (at protein level). Detected in liver.

It localises to the secreted. Its function is as follows. Contributes to protect fish blood from freezing at subzero sea water temperatures. Lowers the blood freezing point by about 1.1 degrees at a concentration of 0.1 mg/ml, and by about 1.5 degrees at a concentration of 0.2 mg/ml. Binds to nascent ice crystals and prevents further growth. This is Antifreeze protein Maxi from Pseudopleuronectes americanus (Winter flounder).